We begin with the raw amino-acid sequence, 340 residues long: Ketol-acid reductoisomerase (NADP(+)) (340 aa).

The region spanning 3-183 is the KARI N-terminal Rossmann domain; that stretch reads INVFYDKDCN…GGGRTGIIET (181 aa). Residues 26 to 29, Arg49, Ser54, and 84 to 87 each bind NADP(+); these read FGSQ and DENQ. Residue His109 is part of the active site. Residue Gly135 participates in NADP(+) binding. The region spanning 184–329 is the KARI C-terminal knotted domain; the sequence is TFKDETETDL…VKLRNMMPWI (146 aa). 4 residues coordinate Mg(2+): Asp192, Glu196, Glu228, and Glu232. Ser253 lines the substrate pocket.

The protein belongs to the ketol-acid reductoisomerase family. Mg(2+) is required as a cofactor.

The enzyme catalyses (2R)-2,3-dihydroxy-3-methylbutanoate + NADP(+) = (2S)-2-acetolactate + NADPH + H(+). It carries out the reaction (2R,3R)-2,3-dihydroxy-3-methylpentanoate + NADP(+) = (S)-2-ethyl-2-hydroxy-3-oxobutanoate + NADPH + H(+). The protein operates within amino-acid biosynthesis; L-isoleucine biosynthesis; L-isoleucine from 2-oxobutanoate: step 2/4. It functions in the pathway amino-acid biosynthesis; L-valine biosynthesis; L-valine from pyruvate: step 2/4. In terms of biological role, involved in the biosynthesis of branched-chain amino acids (BCAA). Catalyzes an alkyl-migration followed by a ketol-acid reduction of (S)-2-acetolactate (S2AL) to yield (R)-2,3-dihydroxy-isovalerate. In the isomerase reaction, S2AL is rearranged via a Mg-dependent methyl migration to produce 3-hydroxy-3-methyl-2-ketobutyrate (HMKB). In the reductase reaction, this 2-ketoacid undergoes a metal-dependent reduction by NADPH to yield (R)-2,3-dihydroxy-isovalerate. This is Ketol-acid reductoisomerase (NADP(+)) from Aliarcobacter butzleri (strain RM4018) (Arcobacter butzleri).